The primary structure comprises 182 residues: Large ribosomal subunit protein uL16 (182 aa).

Belongs to the universal ribosomal protein uL16 family. Part of the 50S ribosomal subunit.

The sequence is that of Large ribosomal subunit protein uL16 from Thermococcus kodakarensis (strain ATCC BAA-918 / JCM 12380 / KOD1) (Pyrococcus kodakaraensis (strain KOD1)).